The sequence spans 479 residues: Sulfate adenylyltransferase subunit 1 (479 aa).

A tr-type G domain is found at 25–239; sequence KSLLRFLTCG…EVLETVDIQR (215 aa). The G1 stretch occupies residues 34 to 41; the sequence is GSVDDGKS. A GTP-binding site is contributed by 34–41; the sequence is GSVDDGKS. Positions 92–96 are G2; it reads GITID. The G3 stretch occupies residues 113-116; that stretch reads DTPG. Residues 113-117 and 168-171 contribute to the GTP site; these read DTPGH and NKMD. A G4 region spans residues 168 to 171; that stretch reads NKMD. Positions 206 to 208 are G5; sequence SAL.

It belongs to the TRAFAC class translation factor GTPase superfamily. Classic translation factor GTPase family. CysN/NodQ subfamily. Heterodimer composed of CysD, the smaller subunit, and CysN.

The catalysed reaction is sulfate + ATP + H(+) = adenosine 5'-phosphosulfate + diphosphate. Its pathway is sulfur metabolism; hydrogen sulfide biosynthesis; sulfite from sulfate: step 1/3. With CysD forms the ATP sulfurylase (ATPS) that catalyzes the adenylation of sulfate producing adenosine 5'-phosphosulfate (APS) and diphosphate, the first enzymatic step in sulfur assimilation pathway. APS synthesis involves the formation of a high-energy phosphoric-sulfuric acid anhydride bond driven by GTP hydrolysis by CysN coupled to ATP hydrolysis by CysD. The sequence is that of Sulfate adenylyltransferase subunit 1 from Salmonella arizonae (strain ATCC BAA-731 / CDC346-86 / RSK2980).